We begin with the raw amino-acid sequence, 360 residues long: 3-dehydroquinate synthase (360 aa).

NAD(+) contacts are provided by residues 106–110 (GVIGD), 130–131 (TS), lysine 143, and lysine 152. 3 residues coordinate Zn(2+): glutamate 185, histidine 246, and histidine 262.

This sequence belongs to the sugar phosphate cyclases superfamily. Dehydroquinate synthase family. Requires Co(2+) as cofactor. Zn(2+) is required as a cofactor. NAD(+) serves as cofactor.

It is found in the cytoplasm. It carries out the reaction 7-phospho-2-dehydro-3-deoxy-D-arabino-heptonate = 3-dehydroquinate + phosphate. The protein operates within metabolic intermediate biosynthesis; chorismate biosynthesis; chorismate from D-erythrose 4-phosphate and phosphoenolpyruvate: step 2/7. Its function is as follows. Catalyzes the conversion of 3-deoxy-D-arabino-heptulosonate 7-phosphate (DAHP) to dehydroquinate (DHQ). The protein is 3-dehydroquinate synthase of Leuconostoc citreum (strain KM20).